Here is a 361-residue protein sequence, read N- to C-terminus: Dihydroorotate dehydrogenase (quinone) (361 aa).

FMN is bound by residues 69–73 (AGFDK) and T93. Position 73 (K73) interacts with substrate. Position 118 to 122 (118 to 122 (NRLGF)) interacts with substrate. FMN contacts are provided by N147 and N180. A substrate-binding site is contributed by N180. S183 acts as the Nucleophile in catalysis. N185 contributes to the substrate binding site. The FMN site is built by K221 and T249. 250-251 (NT) serves as a coordination point for substrate. Residues G271, G300, and 321–322 (YT) each bind FMN.

The protein belongs to the dihydroorotate dehydrogenase family. Type 2 subfamily. As to quaternary structure, monomer. FMN is required as a cofactor.

It is found in the cell membrane. The enzyme catalyses (S)-dihydroorotate + a quinone = orotate + a quinol. Its pathway is pyrimidine metabolism; UMP biosynthesis via de novo pathway; orotate from (S)-dihydroorotate (quinone route): step 1/1. Functionally, catalyzes the conversion of dihydroorotate to orotate with quinone as electron acceptor. This is Dihydroorotate dehydrogenase (quinone) from Roseiflexus sp. (strain RS-1).